A 57-amino-acid chain; its full sequence is Large ribosomal subunit protein bL32 (57 aa).

The segment at 1 to 23 (MAVPKKKTSKSKRDKRRATWRHK) is disordered.

The protein belongs to the bacterial ribosomal protein bL32 family.

The protein is Large ribosomal subunit protein bL32 of Nostoc sp. (strain PCC 7120 / SAG 25.82 / UTEX 2576).